The sequence spans 1710 residues: Ankyrin repeat domain-containing protein 26 (1710 aa).

A disordered region spans residues 1–41; it reads MKKIFSKKGESPLGSFARRQRSSAGGGGEPGEGAYSQPGYH. Residues Ser-11 and Ser-15 each carry the phosphoserine modification. 5 ANK repeats span residues 45-75, 79-108, 112-141, 145-174, and 178-207; these read RDLG…GLND, MNRT…QLNV, ENRT…DPNL, HGNT…NIEA, and DDLT…NVNA. Residues 222–274 are disordered; it reads KEERIPKHSSQNSNSVDESSEDSLSRLSGKPGVDDSWPTSDDEDLNFDTKNVP. Phosphoserine is present on residues Ser-241, Ser-261, Ser-489, and Ser-530. Residues 504-630 form a disordered region; it reads DSVPNKAGGM…EKRTSKESVN (127 aa). The stretch at 529-566 forms a coiled coil; that stretch reads ASEEEQEREGSENNQPQVEEERKKHRNNEMEVSANIHD. Residues 569 to 580 show a composition bias toward acidic residues; that stretch reads TDDAEDDDDDDG. 2 stretches are compositionally biased toward basic and acidic residues: residues 586–602 and 613–626; these read KSGE…ENKE and KEVK…RTSK. Ser-631 is subject to Phosphoserine. A compositionally biased stretch (acidic residues) spans 650-660; sequence DSSLSEIDEDE. The disordered stretch occupies residues 650-698; the sequence is DSSLSEIDEDEGRPTKKTSNEKNKVKNQIQSMDDVDDLTQSSETASEDC. The segment covering 661-673 has biased composition (basic and acidic residues); the sequence is GRPTKKTSNEKNK. Coiled coils occupy residues 743-873, 905-1472, 1517-1587, and 1649-1674; these read KNHC…NARM, EEEK…MVEL, NNFA…NTKL, and LSKM…LESG. The disordered stretch occupies residues 892–912; sequence AQKKMNSENSHSHEEEKDLSH.

In terms of assembly, interacts with TRIO. Interacts with GPS2. Interacts with CCDC85B. Interacts with HMMR.

Functionally, acts as a regulator of adipogenesis. Involved in the regulation of the feeding behavior. The chain is Ankyrin repeat domain-containing protein 26 from Homo sapiens (Human).